The sequence spans 210 residues: Mitochondrial import receptor subunit TOM20-2 (210 aa).

Met-1 bears the N-acetylmethionine mark. The Cytoplasmic segment spans residues 1–178 (MEFSTADFER…SSKKKKRNTE (178 aa)). TPR repeat units follow at residues 42–75 (LLEL…NPGK) and 83–120 (ANAY…DPGN). Over residues 151–161 (GGGGGGGGGGM) the composition is skewed to gly residues. Residues 151-172 (GGGGGGGGGGMASSNVSQSSKK) are disordered. The chain crosses the membrane as a helical span at residues 179–199 (FTYDVCGWIILACGIVAWVGM). Residues 200-210 (AKSLGPPPPAR) lie on the Mitochondrial intermembrane side of the membrane.

The protein belongs to the Tom20 family. As to quaternary structure, forms part of the preprotein translocase complex of the outer mitochondrial membrane (TOM complex) which consists of at least 6 different proteins (TOM5, TOM6, TOM7, TOM20, TOM22/TOM9 and TOM40). Component of a mitochondrial large protein complex that contains, at least, MIC60, DGS1, TOM40, TOM20 proteins, and petC/RISP. The N-terminus is blocked. Expressed in roots, flowers, young cotyledons and leaves.

Its subcellular location is the mitochondrion outer membrane. Its function is as follows. Central component of the receptor complex responsible for the recognition and translocation of cytosolically synthesized mitochondrial preproteins. Together with TOM22 functions as the transit peptide receptor at the surface of the mitochondrion outer membrane and facilitates the movement of preproteins into the translocation pore. The sequence is that of Mitochondrial import receptor subunit TOM20-2 from Arabidopsis thaliana (Mouse-ear cress).